A 252-amino-acid polypeptide reads, in one-letter code: Receptor expression-enhancing protein 3-B (252 aa).

3 helical membrane-spanning segments follow: residues 1 to 21, 35 to 55, and 57 to 77; these read MVSG…YPAY, YVRW…ETIA, and LTVS…VWLL. The interval 163 to 225 is disordered; that stretch reads ETAETRFFPD…GLRRSQSMRS (63 aa). Residues 198 to 211 are compositionally biased toward acidic residues; it reads RTDEDVEVNSEDEV.

Belongs to the DP1 family.

It is found in the endoplasmic reticulum membrane. Functionally, microtubule-binding protein required to ensure proper cell division and nuclear envelope reassembly by sequestering the endoplasmic reticulum away from chromosomes during mitosis. Probably acts by clearing the endoplasmic reticulum membrane from metaphase chromosomes. The sequence is that of Receptor expression-enhancing protein 3-B (reep3-b) from Xenopus laevis (African clawed frog).